The chain runs to 208 residues: Uracil phosphoribosyltransferase (208 aa).

Residues Arg78, Arg103, and 130–138 (DPMLATGGS) each bind 5-phospho-alpha-D-ribose 1-diphosphate. Uracil contacts are provided by residues Ile193 and 198–200 (GDA). Asp199 provides a ligand contact to 5-phospho-alpha-D-ribose 1-diphosphate.

Belongs to the UPRTase family. Mg(2+) serves as cofactor.

It catalyses the reaction UMP + diphosphate = 5-phospho-alpha-D-ribose 1-diphosphate + uracil. It functions in the pathway pyrimidine metabolism; UMP biosynthesis via salvage pathway; UMP from uracil: step 1/1. Its activity is regulated as follows. Allosterically activated by GTP. Functionally, catalyzes the conversion of uracil and 5-phospho-alpha-D-ribose 1-diphosphate (PRPP) to UMP and diphosphate. The sequence is that of Uracil phosphoribosyltransferase from Escherichia fergusonii (strain ATCC 35469 / DSM 13698 / CCUG 18766 / IAM 14443 / JCM 21226 / LMG 7866 / NBRC 102419 / NCTC 12128 / CDC 0568-73).